The chain runs to 321 residues: Cathepsin O (321 aa).

The N-terminal stretch at 1-23 (MDVRALPWLPWLLWLLCRGGGDA) is a signal peptide. A propeptide spans 24-107 (DSRAPFTPTW…EVHMSIPNVS (84 aa)) (activation peptide). N-linked (GlcNAc...) asparagine glycans are attached at residues N62 and N105. Cystine bridges form between C129–C170, C163–C204, and C262–C310. C132 is a catalytic residue. Active-site residues include H269 and N289.

The protein belongs to the peptidase C1 family. As to expression, expressed in all tissues examined. High levels seen in the ovary, kidney and placenta while low levels seen in thymus and skeletal muscle.

The protein localises to the lysosome. It catalyses the reaction The recombinant human enzyme hydrolyzes synthetic endopeptidase substrates including Z-Phe-Arg-NHMec and Z-Arg-Arg-NHMec.. In terms of biological role, proteolytic enzyme possibly involved in normal cellular protein degradation and turnover. The sequence is that of Cathepsin O (CTSO) from Homo sapiens (Human).